We begin with the raw amino-acid sequence, 237 residues long: Ribonuclease PH (237 aa).

Phosphate is bound by residues Arg86 and 124–126 (GTR).

This sequence belongs to the RNase PH family. Homohexameric ring arranged as a trimer of dimers.

It carries out the reaction tRNA(n+1) + phosphate = tRNA(n) + a ribonucleoside 5'-diphosphate. In terms of biological role, phosphorolytic 3'-5' exoribonuclease that plays an important role in tRNA 3'-end maturation. Removes nucleotide residues following the 3'-CCA terminus of tRNAs; can also add nucleotides to the ends of RNA molecules by using nucleoside diphosphates as substrates, but this may not be physiologically important. Probably plays a role in initiation of 16S rRNA degradation (leading to ribosome degradation) during starvation. The protein is Ribonuclease PH of Shewanella sp. (strain W3-18-1).